The sequence spans 271 residues: Peroxiredoxin-4 (271 aa).

A signal peptide spans 1-37 (MEALPLLAATTPDHGRHRRLLLLPLLLFLLPAGAVQG). In terms of domain architecture, Thioredoxin spans 79-237 (AKISKPAPYW…TLRLVQAFQY (159 aa)). The Cysteine sulfenic acid (-SOH) intermediate role is filled by cysteine 124.

The protein belongs to the peroxiredoxin family. AhpC/Prx1 subfamily. Homodimer; disulfide-linked, upon oxidation. 5 homodimers assemble to form a ring-like decamer. Can form heterodimers with PRDX1. The enzyme can be inactivated by further oxidation of the cysteine sulfenic acid (C(P)-SOH) to sulphinic acid (C(P)-SO2H) and sulphonic acid (C(P)-SO3H) instead of its condensation to a disulfide bond.

It is found in the cytoplasm. The protein resides in the endoplasmic reticulum. The enzyme catalyses a hydroperoxide + [thioredoxin]-dithiol = an alcohol + [thioredoxin]-disulfide + H2O. Thiol-specific peroxidase that catalyzes the reduction of hydrogen peroxide and organic hydroperoxides to water and alcohols, respectively. Plays a role in cell protection against oxidative stress by detoxifying peroxides and as sensor of hydrogen peroxide-mediated signaling events. Regulates the activation of NF-kappa-B in the cytosol by a modulation of I-kappa-B-alpha phosphorylation. The chain is Peroxiredoxin-4 (PRDX4) from Homo sapiens (Human).